The chain runs to 630 residues: Golgi apyrase (630 aa).

Residues Met1–Lys500 lie on the Lumenal side of the membrane. Glu152 (proton acceptor) is an active-site residue. Residues Gly501 to Phe517 traverse the membrane as a helical segment. The Cytoplasmic segment spans residues His518–Asp630. Residues Ser586–Leu606 are disordered.

The protein belongs to the GDA1/CD39 NTPase family. Interacts with activator subunit VMA13 of vacuolar H(+)-ATPase. Interacts with CDC55; this interaction is disrupted by adenovirus E4orf4, which remains associated with both YND1 and CDC55. Ca(2+) is required as a cofactor. Requires Mg(2+) as cofactor. The cofactor is Mn(2+).

It localises to the golgi apparatus. The protein resides in the membrane. It carries out the reaction a ribonucleoside 5'-triphosphate + 2 H2O = a ribonucleoside 5'-phosphate + 2 phosphate + 2 H(+). The protein operates within protein modification; protein glycosylation. Activity is inhibited both by interaction with VMA13 and by V-ATPase acidification of the lumen. The activity of VMA13 is not required for YND1 inhibition. Catalyzes the hydrolysis of phosphoanhydride bonds of nucleoside tri- and di-phosphates. Has equal high activity toward ADP/ATP, GDP/GTP, and UDP/UTP and approximately 50% less toward CDP/CTP and thiamine pyrophosphate. Has no activity toward GMP. Required for Golgi glycosylation and cell wall integrity. Together with CDC55, required for adenovirus E4orf4 (early region 4 open reading frame 4) induced toxicity, the apyrase activity is not required for this function. Plays a role in sphingolipid synthesis. The chain is Golgi apyrase (YND1) from Saccharomyces cerevisiae (strain ATCC 204508 / S288c) (Baker's yeast).